The following is a 512-amino-acid chain: GMP synthase [glutamine-hydrolyzing] (512 aa).

The 191-residue stretch at Thr7–Gly197 folds into the Glutamine amidotransferase type-1 domain. The Nucleophile role is filled by Cys84. Catalysis depends on residues His171 and Glu173. One can recognise a GMPS ATP-PPase domain in the interval Trp198–Arg387. Ser225–Ser231 provides a ligand contact to ATP.

As to quaternary structure, homodimer.

It catalyses the reaction XMP + L-glutamine + ATP + H2O = GMP + L-glutamate + AMP + diphosphate + 2 H(+). Its pathway is purine metabolism; GMP biosynthesis; GMP from XMP (L-Gln route): step 1/1. Catalyzes the synthesis of GMP from XMP. The chain is GMP synthase [glutamine-hydrolyzing] from Bacillus cereus (strain B4264).